The following is a 134-amino-acid chain: Isocitrate dehydrogenase [NAD] subunit alpha, mitochondrial (134 aa).

K37 is modified (N6-succinyllysine). T50 bears the Phosphothreonine mark. The substrate site is built by R64, R74, and R95.

It belongs to the isocitrate and isopropylmalate dehydrogenases family. Heterooligomer of subunits alpha (IDH3A), beta (IDH3B), and gamma (IDH3G) in the apparent ratio of 2:1:1. The heterodimer containing one IDH3A and one IDH3B subunit and the heterodimer containing one IDH3A and one IDH3G subunit assemble into a heterotetramer (which contains two subunits of IDH3A, one of IDH3B and one of IDH3G) and further into the heterooctamer. Mg(2+) is required as a cofactor. The cofactor is Mn(2+).

The protein localises to the mitochondrion. It catalyses the reaction D-threo-isocitrate + NAD(+) = 2-oxoglutarate + CO2 + NADH. Its activity is regulated as follows. The heterotetramer and the heterodimer composed of IDH3A and IDH3G subunits can be allosterically activated by citrate (CIT) or/and ADP, and the two activators can act independently or synergistically. The heterodimer composed of IDH3A and IDH3B subunits cannot be allosterically regulated and the allosteric regulation of the heterotetramer is through the IDH3G subunit and not the IDH3B subunit. The IDH3G subunit contains the allosteric site which consists of a CIT-binding site and an ADP-binding site, and the binding of CIT and ADP causes conformational changes at the allosteric site which are transmitted to the active site in the catalytic subunit (IDH3A) through a cascade of conformational changes at the heterodimer interface, leading to stabilization of the isocitrate-binding at the active site and thus activation of the enzyme. ATP can activate the heterotetramer and the heterodimer composed of IDH3A and IDH3G subunits at low concentrations but inhibits their activities at high concentrations, whereas ATP exhibits only inhibitory effect on the heterodimer composed of IDH3A and IDH3B subunits. Its function is as follows. Catalytic subunit of the enzyme which catalyzes the decarboxylation of isocitrate (ICT) into alpha-ketoglutarate. The heterodimer composed of the alpha (IDH3A) and beta (IDH3B) subunits and the heterodimer composed of the alpha (IDH3A) and gamma (IDH3G) subunits, have considerable basal activity but the full activity of the heterotetramer (containing two subunits of IDH3A, one of IDH3B and one of IDH3G) requires the assembly and cooperative function of both heterodimers. The chain is Isocitrate dehydrogenase [NAD] subunit alpha, mitochondrial from Mesocricetus auratus (Golden hamster).